We begin with the raw amino-acid sequence, 610 residues long: UvrABC system protein C (610 aa).

The region spanning 16–94 (SQPGVYRMYD…IKLYQPRYNV (79 aa)) is the GIY-YIG domain. The UVR domain maps to 204–239 (DQVLNQLVARMEQASGDLRFEEAGRLRDQIQAVRRV).

This sequence belongs to the UvrC family. In terms of assembly, interacts with UvrB in an incision complex.

Its subcellular location is the cytoplasm. Functionally, the UvrABC repair system catalyzes the recognition and processing of DNA lesions. UvrC both incises the 5' and 3' sides of the lesion. The N-terminal half is responsible for the 3' incision and the C-terminal half is responsible for the 5' incision. In Erwinia tasmaniensis (strain DSM 17950 / CFBP 7177 / CIP 109463 / NCPPB 4357 / Et1/99), this protein is UvrABC system protein C.